Consider the following 443-residue polypeptide: Glutamate--tRNA ligase 2 (443 aa).

A 'HIGH' region motif is present at residues 7–17 (PSPTGYLHVGN). A 'KMSKS' region motif is present at residues 236–240 (KISKR). ATP is bound at residue lysine 239.

This sequence belongs to the class-I aminoacyl-tRNA synthetase family. Glutamate--tRNA ligase type 1 subfamily. Monomer.

It is found in the cytoplasm. It catalyses the reaction tRNA(Glu) + L-glutamate + ATP = L-glutamyl-tRNA(Glu) + AMP + diphosphate. Catalyzes the attachment of glutamate to tRNA(Glu) in a two-step reaction: glutamate is first activated by ATP to form Glu-AMP and then transferred to the acceptor end of tRNA(Glu). This chain is Glutamate--tRNA ligase 2, found in Ehrlichia canis (strain Jake).